Consider the following 158-residue polypeptide: Transcription elongation factor GreB (158 aa).

The protein belongs to the GreA/GreB family. GreB subfamily.

Necessary for efficient RNA polymerase transcription elongation past template-encoded arresting sites. The arresting sites in DNA have the property of trapping a certain fraction of elongating RNA polymerases that pass through, resulting in locked ternary complexes. Cleavage of the nascent transcript by cleavage factors such as GreA or GreB allows the resumption of elongation from the new 3'terminus. GreB releases sequences of up to 9 nucleotides in length. The protein is Transcription elongation factor GreB of Escherichia coli (strain K12).